Here is a 144-residue protein sequence, read N- to C-terminus: Gas vesicle protein I1 (144 aa).

Residues 1–144 (MSDKQQQKHK…SPTEDEVNDE (144 aa)) form a disordered region. 2 stretches are compositionally biased toward basic residues: residues 7–17 (QKHKQKARQAR) and 26–46 (KARRNLLRQREKLARRRTRNR). A compositionally biased stretch (polar residues) spans 75-94 (MPPQKSNAENAVRNSHSTVP). Positions 122 to 136 (SEASAPSDESASGSP) are enriched in low complexity.

Belongs to the gas vesicle GvpI family. GvpF to GvpM interact with each other in vitro, and may form multi-subunit complex(es). Interacts with GvpC1 and GvpO.

The protein localises to the gas vesicle. Proteins GvpF to GvpM might be involved in nucleating gas vesicle formation. A minor component of the gas vesicle. Gas vesicles are hollow, gas filled proteinaceous nanostructures found in several microbial planktonic microorganisms. They allow positioning of halobacteria at the optimal depth for growth in the poorly aerated, shallow brine pools of their habitat. Its function is as follows. Expression of a 9.5 kb p-vac DNA fragment containing 2 divergently transcribed regions (gvpD-gvpE-gvpF-gvpG-gvpH-gvpI-gvpJ-gvpK-gvpL-gvpM and gvpA-gvpC-gvpN-gvpO) allows H.volcanii to produce gas vesicles. A similar region restores gas vesicle production in H.halobium without the p-vac locus, but it still has the c-vac locus. This chain is Gas vesicle protein I1 (gvpI11), found in Halobacterium salinarum (strain ATCC 700922 / JCM 11081 / NRC-1) (Halobacterium halobium).